Here is a 391-residue protein sequence, read N- to C-terminus: uncharacterized protein (391 aa).

The segment covering 118 to 149 has biased composition (low complexity); the sequence is SINSLPPTTTTTTTTTTTTTIPNNNNNITLSP. Disordered regions lie at residues 118 to 162, 184 to 258, 272 to 327, and 337 to 356; these read SINS…HQHP, QTNV…TPRN, NNNL…NNLN, and LNLN…NNNN. Residues 150–162 show a composition bias toward basic residues; it reads QHHHGQQQHHQHP. A compositionally biased stretch (low complexity) spans 186 to 211; it reads NVNNNNNNNNNNNNNNNSNNNNNNNN. Residues 212-223 are compositionally biased toward polar residues; sequence DFSTPNSFSVPT. Positions 244–256 are enriched in low complexity; that stretch reads NTPNNSTSNPTTP.

This is an uncharacterized protein from Dictyostelium discoideum (Social amoeba).